Here is a 272-residue protein sequence, read N- to C-terminus: Undecaprenyl-diphosphatase (272 aa).

8 helical membrane-spanning segments follow: residues 5 to 25 (YSLF…FLPV), 45 to 65 (AKTF…VVFW), 88 to 108 (HLTL…GLAF), 114 to 134 (ALFD…LLLA), 153 to 172 (YRQA…PGFS), 189 to 209 (YAAS…ASGL), 221 to 241 (GDLP…LIAI), and 251 to 271 (ISFV…YWVF).

Belongs to the UppP family.

The protein localises to the cell inner membrane. It carries out the reaction di-trans,octa-cis-undecaprenyl diphosphate + H2O = di-trans,octa-cis-undecaprenyl phosphate + phosphate + H(+). Its function is as follows. Catalyzes the dephosphorylation of undecaprenyl diphosphate (UPP). Confers resistance to bacitracin. The protein is Undecaprenyl-diphosphatase of Yersinia pseudotuberculosis serotype IB (strain PB1/+).